Here is a 647-residue protein sequence, read N- to C-terminus: Macrolide export ATP-binding/permease protein MacB (647 aa).

In terms of domain architecture, ABC transporter spans Leu-6 to Asn-244. ATP is bound at residue Gly-42–Ser-49. The next 4 helical transmembrane spans lie at Phe-273 to Gly-293, Leu-522 to Ile-542, Leu-577 to Phe-597, and Ser-612 to Ala-632.

Belongs to the ABC transporter superfamily. Macrolide exporter (TC 3.A.1.122) family. As to quaternary structure, homodimer. Part of the tripartite efflux system MacAB-TolC, which is composed of an inner membrane transporter, MacB, a periplasmic membrane fusion protein, MacA, and an outer membrane component, TolC. The complex forms a large protein conduit and can translocate molecules across both the inner and outer membranes. Interacts with MacA.

The protein resides in the cell inner membrane. In terms of biological role, part of the tripartite efflux system MacAB-TolC. MacB is a non-canonical ABC transporter that contains transmembrane domains (TMD), which form a pore in the inner membrane, and an ATP-binding domain (NBD), which is responsible for energy generation. Confers resistance against macrolides. In Shewanella sp. (strain W3-18-1), this protein is Macrolide export ATP-binding/permease protein MacB.